Reading from the N-terminus, the 147-residue chain is Hemoglobin subunit delta (147 aa).

Residues 3–147 (HLTADETALV…VANALAHKYH (145 aa)) enclose the Globin domain. S51 is subject to Phosphoserine. H64 and H93 together coordinate heme b.

This sequence belongs to the globin family. In terms of assembly, heterotetramer of two delta chains and two alpha chains. Red blood cells.

The protein is Hemoglobin subunit delta (HBD) of Dugong dugon (Dugong).